The primary structure comprises 408 residues: Inhibin beta B chain (408 aa).

Residues 1-28 (MDGLPGRALGAACLLMLAVGSLGPGVWG) form the signal peptide. Residues 29 to 60 (SPTPPPLPAAPQPPPPPPGAPGGSQDTCTSCG) form a disordered region. A propeptide spanning residues 29 to 293 (SPTPPPLPAA…GDSRHRIRKR (265 aa)) is cleaved from the precursor. Residues 30–48 (PTPPPLPAAPQPPPPPPGA) show a composition bias toward pro residues. Residue Asn-94 is glycosylated (N-linked (GlcNAc...) asparagine). 4 disulfide bridges follow: Cys-297-Cys-305, Cys-304-Cys-373, Cys-333-Cys-405, and Cys-337-Cys-407.

The protein belongs to the TGF-beta family. Dimeric, linked by one or more disulfide bonds. Inhibin B is a dimer of alpha and beta-B. Activin B is a homodimer of beta-B. Activin AB is a dimer of beta-A and beta-B. Interacts with FST and FSTL3.

It localises to the secreted. Inhibins and activins inhibit and activate, respectively, the secretion of follitropin by the pituitary gland. Inhibins/activins are involved in regulating a number of diverse functions such as hypothalamic and pituitary hormone secretion, gonadal hormone secretion, germ cell development and maturation, erythroid differentiation, insulin secretion, nerve cell survival, embryonic axial development or bone growth, depending on their subunit composition. Inhibins appear to oppose the functions of activins. Its function is as follows. Activin B is a dimer of alpha and beta-B that plays a role in several essential biological processes including embryonic development, stem cell maintenance and differentiation, haematopoiesis, cell proliferation and wound healing. Signals through type I receptor ACVR1C, abundantly expressed in pancreatic beta cells, and type II receptors like ACVR2A. Upon ligand binding, these receptors phosphorylate intracellular signaling mediators SMAD2 and SMAD3, which form a complex with SMAD4, translocate to the nucleus, and regulate gene expression. Plays a crucial role in the induction of hepcidin by inflammation through activation of ACVR1C and subsequent phosphorylation of SMAD1/5/8. Regulates adipocyte lipid metabolism by decreasing non-esterified fatty acids and glycerol release and increases intracellular triglyceride content. Stimulates wound healing by promoting cell migration and hair follicle regeneration through the JNK and ERK signaling pathways downstream of RHOA. Functionally, inhibin B is a dimer of alpha and beta-B that plays a crucial role in the regulation of the reproductive system by inhibiting the secretion of follicle-stimulating hormone (FSH) from the anterior pituitary gland. Thereby, maintains reproductive homeostasis in both males and females. Acts as a more potent suppressor of FSH release than inhibin A. Functions as competitive receptor antagonist binding activin type II receptors with high affinity in the presence of the TGF-beta type III coreceptor/TGFBR3L. In Bos taurus (Bovine), this protein is Inhibin beta B chain (INHBB).